The sequence spans 343 residues: Dipeptide transport system permease protein DppC (343 aa).

The next 5 membrane-spanning stretches (helical) occupy residues 44-64 (LVAM…AFVV), 144-164 (LIIA…YGII), 195-215 (LALL…LFAW), 259-279 (GVIV…EAVL), and 309-329 (FQLI…IFFG). The ABC transmembrane type-1 domain occupies 140 to 329 (LRISLIIALA…VLSLTFIFFG (190 aa)).

It belongs to the binding-protein-dependent transport system permease family. OppBC subfamily. In terms of assembly, the complex is composed of two ATP-binding proteins (DppD and DppF), two transmembrane proteins (DppB and DppC) and a solute-binding protein (DppA).

Its subcellular location is the cell membrane. Functionally, part of the ABC transporter DppABCDF involved in dipeptide transport. Responsible for the translocation of the substrate across the membrane. The sequence is that of Dipeptide transport system permease protein DppC from Lactococcus lactis subsp. cremoris (strain MG1363).